The following is a 179-amino-acid chain: ATP-dependent protease subunit HslV (179 aa).

Thr7 is an active-site residue. Na(+)-binding residues include Gly162, Cys165, and Thr168.

It belongs to the peptidase T1B family. HslV subfamily. A double ring-shaped homohexamer of HslV is capped on each side by a ring-shaped HslU homohexamer. The assembly of the HslU/HslV complex is dependent on binding of ATP.

It is found in the cytoplasm. It carries out the reaction ATP-dependent cleavage of peptide bonds with broad specificity.. Its activity is regulated as follows. Allosterically activated by HslU binding. Its function is as follows. Protease subunit of a proteasome-like degradation complex believed to be a general protein degrading machinery. The protein is ATP-dependent protease subunit HslV of Saccharophagus degradans (strain 2-40 / ATCC 43961 / DSM 17024).